We begin with the raw amino-acid sequence, 476 residues long: Cysteine--tRNA ligase (476 aa).

Residue Cys29 coordinates Zn(2+). Positions Pro31–His41 match the 'HIGH' region motif. Positions 209, 234, and 238 each coordinate Zn(2+). A 'KMSKS' region motif is present at residues Lys266–Ser270. Lys269 contacts ATP.

It belongs to the class-I aminoacyl-tRNA synthetase family. The cofactor is Zn(2+).

The protein resides in the cytoplasm. It catalyses the reaction tRNA(Cys) + L-cysteine + ATP = L-cysteinyl-tRNA(Cys) + AMP + diphosphate. In Thermococcus kodakarensis (strain ATCC BAA-918 / JCM 12380 / KOD1) (Pyrococcus kodakaraensis (strain KOD1)), this protein is Cysteine--tRNA ligase.